Here is a 223-residue protein sequence, read N- to C-terminus: MMIWDWNLSKPSESIKKHSGTWDKGIDYKQTYKMFKEDLQKLKNKELLYEDDYKRIAYLITFLFQLRNGCRIWEAIAGMINIAINIDNLNWNERITVKVRTQKRKDWEFRELIIPKCIKKEDIEMVRDVFLDIKKEIDEKLTMDEKLKAKKKIVKRFGAWLYKNYGINTHSLRYAYVTYLGEHGIPAQVLAKITKHKNINYIETYTQSRLAKEILKNIGDLDD.

One can recognise a Tyr recombinase domain in the interval 29 to 220; the sequence is KQTYKMFKED…AKEILKNIGD (192 aa). Catalysis depends on residues R71, K103, H170, R173, and H196. The active-site O-(3'-phospho-DNA)-tyrosine intermediate is the Y205.

The protein belongs to the 'phage' integrase family.

This is an uncharacterized protein from Methanocaldococcus jannaschii (strain ATCC 43067 / DSM 2661 / JAL-1 / JCM 10045 / NBRC 100440) (Methanococcus jannaschii).